Consider the following 271-residue polypeptide: 4-hydroxy-tetrahydrodipicolinate reductase (271 aa).

8–13 contributes to the NAD(+) binding site; it reads GITGRM. An NADP(+)-binding site is contributed by Arg35. Residues 100–102 and 124–127 each bind NAD(+); these read GST and APNM. Residue His157 is the Proton donor/acceptor of the active site. His158 serves as a coordination point for (S)-2,3,4,5-tetrahydrodipicolinate. The active-site Proton donor is Lys161. 167–168 provides a ligand contact to (S)-2,3,4,5-tetrahydrodipicolinate; that stretch reads GT.

This sequence belongs to the DapB family.

It is found in the cytoplasm. The catalysed reaction is (S)-2,3,4,5-tetrahydrodipicolinate + NAD(+) + H2O = (2S,4S)-4-hydroxy-2,3,4,5-tetrahydrodipicolinate + NADH + H(+). It carries out the reaction (S)-2,3,4,5-tetrahydrodipicolinate + NADP(+) + H2O = (2S,4S)-4-hydroxy-2,3,4,5-tetrahydrodipicolinate + NADPH + H(+). Its pathway is amino-acid biosynthesis; L-lysine biosynthesis via DAP pathway; (S)-tetrahydrodipicolinate from L-aspartate: step 4/4. In terms of biological role, catalyzes the conversion of 4-hydroxy-tetrahydrodipicolinate (HTPA) to tetrahydrodipicolinate. The sequence is that of 4-hydroxy-tetrahydrodipicolinate reductase from Myxococcus xanthus (strain DK1622).